The primary structure comprises 56 residues: Metallothionein (56 aa).

Zn(2+) contacts are provided by Cys-9, Cys-11, Cys-14, Cys-16, Cys-32, Cys-36, His-40, Cys-47, His-49, Cys-52, and Cys-54.

Belongs to the metallothionein superfamily. Type 14 family.

May play a role in essential metal ion homeostasis (especially zinc homeostasis) and resistance to certain non-essential metal ions. Binds four zinc ions. This chain is Metallothionein (smtA), found in Synechococcus elongatus (strain ATCC 33912 / PCC 7942 / FACHB-805) (Anacystis nidulans R2).